A 488-amino-acid polypeptide reads, in one-letter code: Ribulose bisphosphate carboxylase large chain (488 aa).

Substrate-binding residues include Asn-127 and Thr-177. The active-site Proton acceptor is the Lys-179. Substrate is bound at residue Lys-181. Positions 205, 207, and 208 each coordinate Mg(2+). At Lys-205 the chain carries N6-carboxylysine. The active-site Proton acceptor is His-297. Positions 298, 330, and 382 each coordinate substrate.

This sequence belongs to the RuBisCO large chain family. Type I subfamily. Heterohexadecamer of 8 large chains and 8 small chains. Mg(2+) serves as cofactor.

It localises to the plastid. The protein resides in the chloroplast. The enzyme catalyses 2 (2R)-3-phosphoglycerate + 2 H(+) = D-ribulose 1,5-bisphosphate + CO2 + H2O. It carries out the reaction D-ribulose 1,5-bisphosphate + O2 = 2-phosphoglycolate + (2R)-3-phosphoglycerate + 2 H(+). Functionally, ruBisCO catalyzes two reactions: the carboxylation of D-ribulose 1,5-bisphosphate, the primary event in carbon dioxide fixation, as well as the oxidative fragmentation of the pentose substrate in the photorespiration process. Both reactions occur simultaneously and in competition at the same active site. This Guillardia theta (Cryptophyte) protein is Ribulose bisphosphate carboxylase large chain.